We begin with the raw amino-acid sequence, 400 residues long: Elongation factor Tu (400 aa).

The region spanning 10 to 209 is the tr-type G domain; that stretch reads KPHVNVGTIG…AVDSYIPTPE (200 aa). The segment at 19-26 is G1; that stretch reads GHVDHGKT. 19–26 is a GTP binding site; sequence GHVDHGKT. Position 26 (Thr-26) interacts with Mg(2+). The segment at 60 to 64 is G2; sequence GITIS. A G3 region spans residues 81–84; that stretch reads DCPG. Residues 81–85 and 136–139 each bind GTP; these read DCPGH and NKAD. The G4 stretch occupies residues 136 to 139; sequence NKAD. The segment at 174–176 is G5; sequence SGL.

This sequence belongs to the TRAFAC class translation factor GTPase superfamily. Classic translation factor GTPase family. EF-Tu/EF-1A subfamily. In terms of assembly, monomer.

The protein localises to the cytoplasm. The enzyme catalyses GTP + H2O = GDP + phosphate + H(+). In terms of biological role, GTP hydrolase that promotes the GTP-dependent binding of aminoacyl-tRNA to the A-site of ribosomes during protein biosynthesis. This Desulfitobacterium hafniense (strain DSM 10664 / DCB-2) protein is Elongation factor Tu.